The sequence spans 842 residues: MSRPLSDQEKRKQISVRGLAGVENVTELKKNFNRHLHFTLVKDRNVATPRDYYFALAHTVRDHLVGRWIRTQQHYYEKDPKRIYYLSLEFYMGRTLQNTMVNLALENACDEATYQLGLDMEELEEIEEDAGLGNGGLGRLAACFLDSMATLGLAAYGYGIRYEFGIFNQKISGGWQMEEADVWLRYGNPWEKARPEFTLPVHFYGHVEHTSQGAKWVDTQVVLAMPYDTPVPGYRNNVVNTMRLWSAKAPNDFNLKDFNVGGYIQAVLDRNLAENIPRVLYPNDNFFEGKELRLKQEYFVVAATLQDIIRRFKSSKFGCRDPVRTNFDAFPDKVAIQLNDTHPSLAIPELMRILVDLERMDWDKAWDVTVRTCAYTNHTVLPEALERWPVHLLETLLPRHLQIIYEINQRFLNRVAATFPGDVDRLRRMSLVEEGAVKRINMAHLCIAGSHAVNGVARIHSEILKKTIFKDFYELEPHKFQNKTNGITPRRWLVLCNPGLAEVIAERIGEDFISDLDQLRKLLSFVDDEAFIRDVAKVKQENKLKFAAYLEREYKVHINPNSLFDIQVKRIHEYKRQLLNCLHVITLYNRIKREPNKFFVPRTVMIGGKAAPGHHMAKMIIRLITAIGDVVNHDPTVGDRLRVIFLENYRVSLSEKVIPAADLSEQISTAGTEASGTGNMKFMLNGALTIGTMDGANVEMAEEAGEENFFIFGMRVEDVDKLDQRGYNAQEYYDRIPELRQVIEQLSSGFFSPKQPDLFKDIVNMLMHHDRFKVFADYEDYIKCQEKVSALYKNPREWTRMVIRNIATSGKFSSDRTIAQYAREIWGVEPSRQRLPAPDEAI.

Serine 2 carries the post-translational modification N-acetylserine. The residue at position 15 (serine 15) is a Phosphoserine; by PHK; in form phosphorylase A. 2 residues coordinate AMP: aspartate 43 and tyrosine 76. Residues tyrosine 204 and tyrosine 227 each carry the phosphotyrosine modification. Arginine 310–cysteine 319 serves as a coordination point for AMP. Serine 430 is modified (phosphoserine). A Phosphotyrosine modification is found at tyrosine 473. Serine 514 carries the phosphoserine modification. An N6-(pyridoxal phosphate)lysine modification is found at lysine 681. Phosphoserine occurs at positions 747 and 748.

Belongs to the glycogen phosphorylase family. As to quaternary structure, homodimer. Homotetramer; to form the enzymatically active phosphorylase A. The cofactor is pyridoxal 5'-phosphate. Post-translationally, phosphorylation of Ser-15 converts phosphorylase B (unphosphorylated) to phosphorylase A.

It carries out the reaction [(1-&gt;4)-alpha-D-glucosyl](n) + phosphate = [(1-&gt;4)-alpha-D-glucosyl](n-1) + alpha-D-glucose 1-phosphate. Its activity is regulated as follows. Allosterically regulated through the non-covalent binding of metabolites, being activated by AMP and inhibited by ATP, ADP, and glucose-6-phosphate. The activity is also controlled by post-translational modifications including phosphorylation. Allosteric enzyme that catalyzes the rate-limiting step in glycogen catabolism, the phosphorolytic cleavage of glycogen to produce glucose-1-phosphate, and plays a central role in maintaining cellular and organismal glucose homeostasis. In Macaca fascicularis (Crab-eating macaque), this protein is Glycogen phosphorylase, muscle form.